The primary structure comprises 532 residues: Cytochrome P450 99A2 (532 aa).

A helical transmembrane segment spans residues 30–50 (SAATLTLVSLLTLPILLALLT). Cys-468 contacts heme. The helical transmembrane segment at 473–493 (FGMVLLELIVARLLYYFDWSL) threads the bilayer.

It belongs to the cytochrome P450 family. Heme is required as a cofactor.

It is found in the membrane. Its function is as follows. Involved in momilactone phytoalexins biosynthesis. Participates in the biosynthetic steps between 9-beta-pimara-7,15-diene and 3-beta-hydroxy-9-beta-pimara-7,15-dien-19,6-beta-olide. The protein is Cytochrome P450 99A2 (CYP99A2) of Oryza sativa subsp. japonica (Rice).